The primary structure comprises 128 residues: Small ribosomal subunit protein uS14m (128 aa).

The protein belongs to the universal ribosomal protein uS14 family. In terms of assembly, component of the mitochondrial ribosome small subunit (28S) which comprises a 12S rRNA and about 30 distinct proteins. Interacts with LIAT1.

Its subcellular location is the mitochondrion. The sequence is that of Small ribosomal subunit protein uS14m (Mrps14) from Mus musculus (Mouse).